The following is a 495-amino-acid chain: Adenosylhomocysteinase (495 aa).

Residues Thr71, Asp156, and Glu218 each contribute to the substrate site. 219-221 contacts NAD(+); the sequence is TTT. Positions 248 and 252 each coordinate substrate. NAD(+)-binding positions include Asn253, 282–287, Glu305, Asn340, 361–363, and Asn409; these read GYGDVG and IGH.

Belongs to the adenosylhomocysteinase family. It depends on NAD(+) as a cofactor.

It localises to the cytoplasm. It carries out the reaction S-adenosyl-L-homocysteine + H2O = L-homocysteine + adenosine. The protein operates within amino-acid biosynthesis; L-homocysteine biosynthesis; L-homocysteine from S-adenosyl-L-homocysteine: step 1/1. Its function is as follows. May play a key role in the regulation of the intracellular concentration of adenosylhomocysteine. In Mycobacterium bovis (strain ATCC BAA-935 / AF2122/97), this protein is Adenosylhomocysteinase.